Consider the following 79-residue polypeptide: Cytochrome b (79 aa).

The next 3 membrane-spanning stretches (helical) occupy residues threonine 1–methionine 7, tryptophan 31–isoleucine 52, and tryptophan 67–methionine 79. Heme b contacts are provided by histidine 37 and histidine 51.

It belongs to the cytochrome b family. As to quaternary structure, the cytochrome bc1 complex contains 3 respiratory subunits (MT-CYB, CYC1 and UQCRFS1), 2 core proteins (UQCRC1 and UQCRC2) and probably 6 low-molecular weight proteins. It depends on heme b as a cofactor.

The protein resides in the mitochondrion inner membrane. Its function is as follows. Component of the ubiquinol-cytochrome c reductase complex (complex III or cytochrome b-c1 complex) that is part of the mitochondrial respiratory chain. The b-c1 complex mediates electron transfer from ubiquinol to cytochrome c. Contributes to the generation of a proton gradient across the mitochondrial membrane that is then used for ATP synthesis. In Amphilophus citrinellus (Midas cichlid), this protein is Cytochrome b (mt-cyb).